Here is a 228-residue protein sequence, read N- to C-terminus: LHFPL tetraspan subfamily member 2 protein (228 aa).

Transmembrane regions (helical) follow at residues 11-31, 102-122, 132-152, and 181-201; these read MLWT…FMSA, IFLA…VFTM, IFNV…LGLI, and LGWA…CAVF.

It belongs to the LHFP family. Expressed in all tissues and cell lines examined except brain and peripheral blood leukocytes.

It localises to the membrane. In terms of biological role, plays a role in female and male fertility. Involved in distal reproductive tract development. This is LHFPL tetraspan subfamily member 2 protein from Homo sapiens (Human).